The chain runs to 90 residues: Acylphosphatase (90 aa).

Residues 3–90 (QKLFIVTGHV…EQFEHFEIRR (88 aa)) enclose the Acylphosphatase-like domain. Catalysis depends on residues R18 and N36.

The protein belongs to the acylphosphatase family.

The catalysed reaction is an acyl phosphate + H2O = a carboxylate + phosphate + H(+). In Actinobacillus pleuropneumoniae serotype 5b (strain L20), this protein is Acylphosphatase (acyP).